The chain runs to 98 residues: Lipolysis-activating peptide 1-beta chain (98 aa).

The signal sequence occupies residues 1–22 (MANVQVIFVAYIAVIAFSMVYG). An LCN-type CS-alpha/beta domain is found at 23-91 (DDYKPFGEHN…FLKAMEKQCP (69 aa)). Cystine bridges form between cysteine 37-cysteine 60, cysteine 45-cysteine 70, and cysteine 49-cysteine 72.

The protein belongs to the long (3 C-C) scorpion toxin superfamily. In terms of assembly, homodimer; disulfide-linked or monomer (edited version) or heterodimer of an alpha chain (AC B8XH01) and this beta chain (non-edited version). Expressed by the venom gland.

The protein localises to the secreted. Its function is as follows. The homodimer inhibits HMG-CoA reductase (HMGCR) (32% of inhibition produced by 0.6 uM), a glycoprotein involved in the control of cholesterol biosynthesis. The inhibitory effects of bumarsin are seen at much lower concentrations (0.6 uM) than that for statins such as atorvastatin (5 mM) and simvastatin (10 uM). In addition to inhibition of HMG-CoA reductase, this protein lowers cholesterol levels by inducing steroid hormone synthesis via StAR, and by increasing reverse cholesterol transport mediated by the induction of ABCA1 and APOA1. The heterodimer non-edited LVP1 induces lipolysis in rat adipocytes. Induction of lipolysis by LVP1 appears to be mediated through the beta-2 adrenergic receptor pathway (ADRB2). Functionally, the monomer edited version, similar to alpha-toxins, may modulate voltage-gated sodium channels (Nav) and may block voltage-gated potassium channels (Kv). The chain is Lipolysis-activating peptide 1-beta chain from Buthus israelis (Israeli scorpion).